Reading from the N-terminus, the 195-residue chain is Imidazoleglycerol-phosphate dehydratase (195 aa).

The protein belongs to the imidazoleglycerol-phosphate dehydratase family.

It localises to the cytoplasm. It catalyses the reaction D-erythro-1-(imidazol-4-yl)glycerol 3-phosphate = 3-(imidazol-4-yl)-2-oxopropyl phosphate + H2O. The protein operates within amino-acid biosynthesis; L-histidine biosynthesis; L-histidine from 5-phospho-alpha-D-ribose 1-diphosphate: step 6/9. The sequence is that of Imidazoleglycerol-phosphate dehydratase from Cereibacter sphaeroides (strain ATCC 17025 / ATH 2.4.3) (Rhodobacter sphaeroides).